Here is a 498-residue protein sequence, read N- to C-terminus: ATP synthase subunit beta, chloroplastic (498 aa).

An ATP-binding site is contributed by 172 to 179 (GGAGVGKT).

It belongs to the ATPase alpha/beta chains family. In terms of assembly, F-type ATPases have 2 components, CF(1) - the catalytic core - and CF(0) - the membrane proton channel. CF(1) has five subunits: alpha(3), beta(3), gamma(1), delta(1), epsilon(1). CF(0) has four main subunits: a(1), b(1), b'(1) and c(9-12).

The protein localises to the plastid. It is found in the chloroplast thylakoid membrane. The catalysed reaction is ATP + H2O + 4 H(+)(in) = ADP + phosphate + 5 H(+)(out). Its function is as follows. Produces ATP from ADP in the presence of a proton gradient across the membrane. The catalytic sites are hosted primarily by the beta subunits. This is ATP synthase subunit beta, chloroplastic from Drimys granadensis.